A 104-amino-acid polypeptide reads, in one-letter code: L-rhamnose mutarotase (104 aa).

A substrate-binding site is contributed by Tyr-18. The Proton donor role is filled by His-22. Substrate is bound by residues Tyr-41 and 76–77; that span reads WW.

It belongs to the rhamnose mutarotase family. In terms of assembly, homodimer.

The protein localises to the cytoplasm. It catalyses the reaction alpha-L-rhamnose = beta-L-rhamnose. It participates in carbohydrate metabolism; L-rhamnose metabolism. Involved in the anomeric conversion of L-rhamnose. This is L-rhamnose mutarotase from Enterobacter sp. (strain 638).